The chain runs to 429 residues: tRNA modification GTPase MnmE (429 aa).

Residues Arg-20, Glu-77, and Arg-117 each contribute to the (6S)-5-formyl-5,6,7,8-tetrahydrofolate site. The 141-residue stretch at Gly-213–Ser-353 folds into the TrmE-type G domain. Asn-223 provides a ligand contact to K(+). GTP-binding positions include Asn-223–Ser-228, Ser-242–Thr-248, and Asp-267–Gly-270. Mg(2+) is bound at residue Ser-227. 3 residues coordinate K(+): Ser-242, Ile-244, and Thr-247. Thr-248 contributes to the Mg(2+) binding site. Lys-429 contributes to the (6S)-5-formyl-5,6,7,8-tetrahydrofolate binding site.

It belongs to the TRAFAC class TrmE-Era-EngA-EngB-Septin-like GTPase superfamily. TrmE GTPase family. As to quaternary structure, homodimer. Heterotetramer of two MnmE and two MnmG subunits. The cofactor is K(+).

Its subcellular location is the cytoplasm. Its function is as follows. Exhibits a very high intrinsic GTPase hydrolysis rate. Involved in the addition of a carboxymethylaminomethyl (cmnm) group at the wobble position (U34) of certain tRNAs, forming tRNA-cmnm(5)s(2)U34. The protein is tRNA modification GTPase MnmE of Dinoroseobacter shibae (strain DSM 16493 / NCIMB 14021 / DFL 12).